Reading from the N-terminus, the 162-residue chain is MIELFMKQKMFSFKDAFHIYDRDEQETFKVEGRFFSLGDSLQMTDSSGKTLVSIEQKLMSLLPRYEISIGGKTVCEVTKKVTFSKPKFVISGLNWEIDGDLWRDEFQLTDGENVRMSVSKKWLSWGDSYHLQIAYEEDVLICTAIAIVLDMVLYNDEDESIF.

Belongs to the LOR family.

This is an uncharacterized protein from Bacillus subtilis (strain 168).